Reading from the N-terminus, the 541-residue chain is Calcium-dependent protein kinase 26 (541 aa).

The segment covering 1-11 has biased composition (gly residues); it reads MGQCCTGGGKA. The segment at 1–74 is disordered; the sequence is MGQCCTGGGK…AGPIGEVLER (74 aa). The N-myristoyl glycine moiety is linked to residue Gly2. The segment covering 38–67 has biased composition (low complexity); the sequence is AKQQPCSPAAKAAATEAAAAASSSKKPAGP. The Protein kinase domain occupies 83–341; sequence YSIGKELGRG…AFQVLNHPWI (259 aa). Residues 89–97 and Lys112 contribute to the ATP site; that span reads LGRGQFGVT. Asp207 acts as the Proton acceptor in catalysis. The tract at residues 347–377 is autoinhibitory domain; it reads APDVPLDNVVLNRLKQFRAMNQFKKAALRII. EF-hand domains are found at residues 384–419, 420–455, 456–491, and 493–526; these read EEIKGLKEMFKNIDKDNSGTITLEELKNGLAKQGTK, FSDNEIEQLMEAADADGNGIIDYEEFVTATVHMNKM, DREEHLYTAFQYFDKDNSGYITKEELEQALKEQGLY, and ANEIKDVITDADSNNDGRIDYSEFVAMMRKGSGC. Asp397, Asp399, Ser401, Thr403, Glu408, Asp433, Asp435, Asn437, Glu444, Asp469, Asp471, Ser473, Tyr475, Glu480, Asp504, Asn506, Asp508, Arg510, and Glu515 together coordinate Ca(2+).

This sequence belongs to the protein kinase superfamily. Ser/Thr protein kinase family. CDPK subfamily. In terms of tissue distribution, specifically expressed in heading panicles, spikelets and mature pollen grains. Not expressed in vegetative tissues.

The protein localises to the membrane. The enzyme catalyses L-seryl-[protein] + ATP = O-phospho-L-seryl-[protein] + ADP + H(+). It catalyses the reaction L-threonyl-[protein] + ATP = O-phospho-L-threonyl-[protein] + ADP + H(+). Activated by calcium. Autophosphorylation may play an important role in the regulation of the kinase activity. Functionally, may play a role in signal transduction pathways that involve calcium as a second messenger. This chain is Calcium-dependent protein kinase 26, found in Oryza sativa subsp. japonica (Rice).